We begin with the raw amino-acid sequence, 253 residues long: Chloride intracellular channel protein 4 (253 aa).

Ala2 is subject to N-acetylalanine. Positions 2-101 (ALSMPLNGLK…EEFLEEVLCP (100 aa)) are required for insertion into the membrane. At Ser4 the chain carries Phosphoserine. Position 24 is an N6-acetyllysine (Lys24). A G-site motif is present at residues 35–38 (CPFS). The chain crosses the membrane as a helical span at residues 37–57 (FSQRLFMILWLKGVVFSVTTV). The GST C-terminal domain maps to 81–244 (NSEVKTDVNK…PSDKEVEIAY (164 aa)). Lys130 carries the post-translational modification N6-acetyllysine. Phosphoserine occurs at positions 132, 167, and 236. Tyr244 carries the phosphotyrosine modification.

This sequence belongs to the chloride channel CLIC family. As to quaternary structure, component of a multimeric complex consisting of several cytoskeletal proteins, including actin, ezrin, alpha-actinin, gelsolin, IQGAP1 and CLIC5A. Binds directly to brain dynamin I in a complex containing actin, tubulin and 14-3-3 isoforms. Monomer. Interacts with HRH3. Interacts with AKAP9. Detected in epithelial cells from colon, esophagus and kidney (at protein level). Expression is prominent in heart, kidney, placenta and skeletal muscle.

The protein localises to the cytoplasm. It localises to the cytoskeleton. It is found in the microtubule organizing center. The protein resides in the centrosome. Its subcellular location is the cytoplasmic vesicle membrane. The protein localises to the nucleus. It localises to the cell membrane. It is found in the mitochondrion. The protein resides in the cell junction. Its subcellular location is the endoplasmic reticulum membrane. It catalyses the reaction chloride(in) = chloride(out). The enzyme catalyses thiocyanate(in) = thiocyanate(out). The catalysed reaction is nitrate(in) = nitrate(out). It carries out the reaction iodide(out) = iodide(in). It catalyses the reaction bromide(in) = bromide(out). The enzyme catalyses fluoride(in) = fluoride(out). The catalysed reaction is choline(out) = choline(in). With respect to regulation, inhibited by rapamycin, amphotericin B and IAA-94. In terms of biological role, in the soluble state, catalyzes glutaredoxin-like thiol disulfide exchange reactions with reduced glutathione as electron donor. Can insert into membranes and form voltage-dependent multi-ion conductive channels. Membrane insertion seems to be redox-regulated and may occur only under oxidizing conditions. Has alternate cellular functions like a potential role in angiogenesis or in maintaining apical-basolateral membrane polarity during mitosis and cytokinesis. Could also promote endothelial cell proliferation and regulate endothelial morphogenesis (tubulogenesis). Promotes cell-surface expression of HRH3. This Homo sapiens (Human) protein is Chloride intracellular channel protein 4.